Here is a 93-residue protein sequence, read N- to C-terminus: Small ribosomal subunit protein uS19c (93 aa).

A disordered region spans residues 73–93; that stretch reads EFSPTRTFRGHTKSDKKSRRP. Basic residues predominate over residues 80-93; sequence FRGHTKSDKKSRRP.

It belongs to the universal ribosomal protein uS19 family.

It localises to the plastid. The protein resides in the chloroplast. In terms of biological role, protein S19 forms a complex with S13 that binds strongly to the 16S ribosomal RNA. The protein is Small ribosomal subunit protein uS19c (rps19) of Mesostigma viride (Green alga).